The sequence spans 339 residues: Ribosomal RNA small subunit methyltransferase C (339 aa).

The protein belongs to the methyltransferase superfamily. RsmC family. In terms of assembly, monomer.

It localises to the cytoplasm. It carries out the reaction guanosine(1207) in 16S rRNA + S-adenosyl-L-methionine = N(2)-methylguanosine(1207) in 16S rRNA + S-adenosyl-L-homocysteine + H(+). Its function is as follows. Specifically methylates the guanine in position 1207 of 16S rRNA in the 30S particle. The chain is Ribosomal RNA small subunit methyltransferase C from Aliivibrio salmonicida (strain LFI1238) (Vibrio salmonicida (strain LFI1238)).